The primary structure comprises 344 residues: Holliday junction branch migration complex subunit RuvB (344 aa).

Low complexity predominate over residues 1–10 (MAIQSSSSGS). The disordered stretch occupies residues 1 to 37 (MAIQSSSSGSKPPAPKRLVAPEATAAEGDGGRDEGLR). Residues 13–197 (PAPKRLVAPE…FGLIQRLEFY (185 aa)) are large ATPase domain (RuvB-L). Residues L36, R37, G78, K81, T82, T83, 144-146 (EDF), R187, Y197, and R234 contribute to the ATP site. T82 is a Mg(2+) binding site. A small ATPAse domain (RuvB-S) region spans residues 198 to 268 (SCSDLEAIVS…VVVEALAMHR (71 aa)). Positions 271 to 344 (GRGLDPSDRR…DAGRAHLEAA (74 aa)) are head domain (RuvB-H). Residues R326 and R331 each contribute to the DNA site.

This sequence belongs to the RuvB family. As to quaternary structure, homohexamer. Forms an RuvA(8)-RuvB(12)-Holliday junction (HJ) complex. HJ DNA is sandwiched between 2 RuvA tetramers; dsDNA enters through RuvA and exits via RuvB. An RuvB hexamer assembles on each DNA strand where it exits the tetramer. Each RuvB hexamer is contacted by two RuvA subunits (via domain III) on 2 adjacent RuvB subunits; this complex drives branch migration. In the full resolvosome a probable DNA-RuvA(4)-RuvB(12)-RuvC(2) complex forms which resolves the HJ.

The protein resides in the cytoplasm. The catalysed reaction is ATP + H2O = ADP + phosphate + H(+). Functionally, the RuvA-RuvB-RuvC complex processes Holliday junction (HJ) DNA during genetic recombination and DNA repair, while the RuvA-RuvB complex plays an important role in the rescue of blocked DNA replication forks via replication fork reversal (RFR). RuvA specifically binds to HJ cruciform DNA, conferring on it an open structure. The RuvB hexamer acts as an ATP-dependent pump, pulling dsDNA into and through the RuvAB complex. RuvB forms 2 homohexamers on either side of HJ DNA bound by 1 or 2 RuvA tetramers; 4 subunits per hexamer contact DNA at a time. Coordinated motions by a converter formed by DNA-disengaged RuvB subunits stimulates ATP hydrolysis and nucleotide exchange. Immobilization of the converter enables RuvB to convert the ATP-contained energy into a lever motion, pulling 2 nucleotides of DNA out of the RuvA tetramer per ATP hydrolyzed, thus driving DNA branch migration. The RuvB motors rotate together with the DNA substrate, which together with the progressing nucleotide cycle form the mechanistic basis for DNA recombination by continuous HJ branch migration. Branch migration allows RuvC to scan DNA until it finds its consensus sequence, where it cleaves and resolves cruciform DNA. This chain is Holliday junction branch migration complex subunit RuvB, found in Synechococcus sp. (strain RCC307).